Here is a 234-residue protein sequence, read N- to C-terminus: Peptidase E (234 aa).

Active-site charge relay system residues include Ser-123, Asp-138, and His-160.

The protein belongs to the peptidase S51 family.

It localises to the cytoplasm. It carries out the reaction Dipeptidase E catalyzes the hydrolysis of dipeptides Asp-|-Xaa. It does not act on peptides with N-terminal Glu, Asn or Gln, nor does it cleave isoaspartyl peptides.. In terms of biological role, hydrolyzes dipeptides containing N-terminal aspartate residues. May play a role in allowing the cell to use peptide aspartate to spare carbon otherwise required for the synthesis of the aspartate family of amino acids. The protein is Peptidase E of Actinobacillus pleuropneumoniae serotype 3 (strain JL03).